A 108-amino-acid chain; its full sequence is Translation initiation factor 1A (108 aa).

The region spanning 11–85 (PSKDVPKPEE…TKADIVYRYM (75 aa)) is the S1-like domain.

It belongs to the eIF-1A family.

Its function is as follows. Seems to be required for maximal rate of protein biosynthesis. Enhances ribosome dissociation into subunits and stabilizes the binding of the initiator Met-tRNA(I) to 40 S ribosomal subunits. In Metallosphaera sedula (strain ATCC 51363 / DSM 5348 / JCM 9185 / NBRC 15509 / TH2), this protein is Translation initiation factor 1A (eIF1A).